We begin with the raw amino-acid sequence, 136 residues long: MILNWKLLGILVLCLHTRGISGSEGHPSHPPAEDREEAGSPTLPQGPPVPGDPWPGAPPLFEDPPPTRPSRPWRDLPETGVWLPEPPRTDPPQPPRPDDPWPAGPQPPENPWPPAPEVDNRPQEEPDLDPPREEYR.

The signal sequence occupies residues 1–22; the sequence is MILNWKLLGILVLCLHTRGISG. A disordered region spans residues 20 to 136; that stretch reads ISGSEGHPSH…DLDPPREEYR (117 aa). Composition is skewed to pro residues over residues 44-69 and 84-116; these read PQGPPVPGDPWPGAPPLFEDPPPTRP and PEPPRTDPPQPPRPDDPWPAGPQPPENPWPPAP. The segment covering 118–136 has biased composition (basic and acidic residues); that stretch reads VDNRPQEEPDLDPPREEYR.

As to expression, expressed in skin. Also expressed in heart and skeletal muscle.

The protein localises to the secreted. The sequence is that of Psoriasis susceptibility 1 candidate gene 2 protein (PSORS1C2) from Homo sapiens (Human).